The sequence spans 82 residues: DNA-directed RNA polymerase subunit Rpo5 (82 aa).

It belongs to the archaeal Rpo5/eukaryotic RPB5 RNA polymerase subunit family. As to quaternary structure, part of the RNA polymerase complex.

It localises to the cytoplasm. It carries out the reaction RNA(n) + a ribonucleoside 5'-triphosphate = RNA(n+1) + diphosphate. Functionally, DNA-dependent RNA polymerase (RNAP) catalyzes the transcription of DNA into RNA using the four ribonucleoside triphosphates as substrates. The polypeptide is DNA-directed RNA polymerase subunit Rpo5 (Pyrococcus abyssi (strain GE5 / Orsay)).